The primary structure comprises 232 residues: Phosphatidylserine decarboxylase proenzyme (232 aa).

The Schiff-base intermediate with substrate; via pyruvic acid role is filled by S190. A Pyruvic acid (Ser); by autocatalysis modification is found at S190.

Belongs to the phosphatidylserine decarboxylase family. PSD-A subfamily. Heterodimer of a large membrane-associated beta subunit and a small pyruvoyl-containing alpha subunit. Pyruvate is required as a cofactor. In terms of processing, is synthesized initially as an inactive proenzyme. Formation of the active enzyme involves a self-maturation process in which the active site pyruvoyl group is generated from an internal serine residue via an autocatalytic post-translational modification. Two non-identical subunits are generated from the proenzyme in this reaction, and the pyruvate is formed at the N-terminus of the alpha chain, which is derived from the carboxyl end of the proenzyme. The post-translation cleavage follows an unusual pathway, termed non-hydrolytic serinolysis, in which the side chain hydroxyl group of the serine supplies its oxygen atom to form the C-terminus of the beta chain, while the remainder of the serine residue undergoes an oxidative deamination to produce ammonia and the pyruvoyl prosthetic group on the alpha chain.

The protein localises to the cell membrane. The enzyme catalyses a 1,2-diacyl-sn-glycero-3-phospho-L-serine + H(+) = a 1,2-diacyl-sn-glycero-3-phosphoethanolamine + CO2. It participates in phospholipid metabolism; phosphatidylethanolamine biosynthesis; phosphatidylethanolamine from CDP-diacylglycerol: step 2/2. Catalyzes the formation of phosphatidylethanolamine (PtdEtn) from phosphatidylserine (PtdSer). The polypeptide is Phosphatidylserine decarboxylase proenzyme (Cereibacter sphaeroides (strain KD131 / KCTC 12085) (Rhodobacter sphaeroides)).